The primary structure comprises 280 residues: Aspartate/glutamate leucyltransferase (280 aa).

Belongs to the R-transferase family. Bpt subfamily.

It is found in the cytoplasm. It catalyses the reaction N-terminal L-glutamyl-[protein] + L-leucyl-tRNA(Leu) = N-terminal L-leucyl-L-glutamyl-[protein] + tRNA(Leu) + H(+). It carries out the reaction N-terminal L-aspartyl-[protein] + L-leucyl-tRNA(Leu) = N-terminal L-leucyl-L-aspartyl-[protein] + tRNA(Leu) + H(+). Functions in the N-end rule pathway of protein degradation where it conjugates Leu from its aminoacyl-tRNA to the N-termini of proteins containing an N-terminal aspartate or glutamate. This chain is Aspartate/glutamate leucyltransferase, found in Cereibacter sphaeroides (strain KD131 / KCTC 12085) (Rhodobacter sphaeroides).